Consider the following 392-residue polypeptide: Zinc finger protein CONSTANS-LIKE 7 (392 aa).

Zn(2+) is bound by residues Cys22, Cys25, Cys46, and His51. The segment at Cys22–Leu65 adopts a B box-type; atypical zinc-finger fold. The stretch at Lys226–Lys254 forms a coiled coil. Disordered stretches follow at residues Glu246 to Lys271 and Ser326 to Glu346. The segment covering Gly259 to Lys271 has biased composition (basic and acidic residues). The CCT domain maps to Arg345–Arg387.

Belongs to the CONSTANS family.

It is found in the nucleus. The polypeptide is Zinc finger protein CONSTANS-LIKE 7 (COL7) (Arabidopsis thaliana (Mouse-ear cress)).